A 25-amino-acid polypeptide reads, in one-letter code: M-lycotoxin-Hc1a (25 aa).

Position 25 is a leucine amide (Leu25).

The protein belongs to the cationic peptide 04 (cupiennin) family. 05 subfamily. In terms of tissue distribution, expressed by the venom gland.

Its subcellular location is the secreted. It localises to the target cell membrane. Its function is as follows. Forms pore that permeabilize the cell membrane. Promotes efflux of calcium from synaptosomes, causes hemolysis, and dissipates voltage gradients across muscle membrane. Potently inhibits the growth of bacteria, yeast and Leishmania. Is lethal to lepidopteran larvae. May function both in the prey capture strategy as well as protection from infectious organisms arising from prey ingestion. This Hogna carolinensis (Carolina wolf spider) protein is M-lycotoxin-Hc1a.